The primary structure comprises 310 residues: Ribosomal RNA small subunit methyltransferase H (310 aa).

Residues 33-35 (AGH), D53, F79, D100, and Q107 contribute to the S-adenosyl-L-methionine site.

The protein belongs to the methyltransferase superfamily. RsmH family.

Its subcellular location is the cytoplasm. The enzyme catalyses cytidine(1402) in 16S rRNA + S-adenosyl-L-methionine = N(4)-methylcytidine(1402) in 16S rRNA + S-adenosyl-L-homocysteine + H(+). Specifically methylates the N4 position of cytidine in position 1402 (C1402) of 16S rRNA. This chain is Ribosomal RNA small subunit methyltransferase H, found in Clostridium beijerinckii (strain ATCC 51743 / NCIMB 8052) (Clostridium acetobutylicum).